A 335-amino-acid polypeptide reads, in one-letter code: Mitochondrial amidoxime reducing component 2 (335 aa).

The transit peptide at 1–35 directs the protein to the mitochondrion; it reads MGASSSSALARLGLPARPWPRWLGVAALGLAAVAL. Residues lysine 59, lysine 138, and lysine 144 each participate in a glycyl lysine isopeptide (Lys-Gly) (interchain with G-Cter in ubiquitin) cross-link. Lysine 156 is subject to N6-acetyllysine; alternate. Lysine 156 is covalently cross-linked (Glycyl lysine isopeptide (Lys-Gly) (interchain with G-Cter in ubiquitin); alternate). Glycyl lysine isopeptide (Lys-Gly) (interchain with G-Cter in ubiquitin) cross-links involve residues lysine 166, lysine 173, lysine 187, lysine 287, and lysine 294. Residues 188–334 form the MOSC domain; that stretch reads GRTSRKLLPT…LRVGDPVYRM (147 aa).

Component of a complex composed of cytochrome b5, NADH-cytochrome b5 reductase (CYB5R3) and MTARC2. The cofactor is Mo-molybdopterin. Post-translationally, ubiquitinated by PRKN during mitophagy, leading to its degradation and enhancement of mitophagy. Deubiquitinated by USP30.

Its subcellular location is the mitochondrion outer membrane. It is found in the peroxisome. It catalyses the reaction N(omega)-hydroxy-L-arginine + 2 Fe(II)-[cytochrome b5] + 2 H(+) = L-arginine + 2 Fe(III)-[cytochrome b5] + H2O. In terms of biological role, catalyzes the reduction of N-oxygenated molecules, acting as a counterpart of cytochrome P450 and flavin-containing monooxygenases in metabolic cycles. As a component of prodrug-converting system, reduces a multitude of N-hydroxylated prodrugs particularly amidoximes, leading to increased drug bioavailability. May be involved in mitochondrial N(omega)-hydroxy-L-arginine (NOHA) reduction, regulating endogenous nitric oxide levels and biosynthesis. Postulated to cleave the N-OH bond of N-hydroxylated substrates in concert with electron transfer from NADH to cytochrome b5 reductase then to cytochrome b5, the ultimate electron donor that primes the active site for substrate reduction. The protein is Mitochondrial amidoxime reducing component 2 of Homo sapiens (Human).